The primary structure comprises 167 residues: SsrA-binding protein (167 aa).

The interval 139 to 167 is disordered; it reads QAHDKRHAEKEREWQRDKQRIMRAHNRNA. A compositionally biased stretch (basic and acidic residues) spans 144-158; the sequence is RHAEKEREWQRDKQR.

The protein belongs to the SmpB family.

It localises to the cytoplasm. Functionally, required for rescue of stalled ribosomes mediated by trans-translation. Binds to transfer-messenger RNA (tmRNA), required for stable association of tmRNA with ribosomes. tmRNA and SmpB together mimic tRNA shape, replacing the anticodon stem-loop with SmpB. tmRNA is encoded by the ssrA gene; the 2 termini fold to resemble tRNA(Ala) and it encodes a 'tag peptide', a short internal open reading frame. During trans-translation Ala-aminoacylated tmRNA acts like a tRNA, entering the A-site of stalled ribosomes, displacing the stalled mRNA. The ribosome then switches to translate the ORF on the tmRNA; the nascent peptide is terminated with the 'tag peptide' encoded by the tmRNA and targeted for degradation. The ribosome is freed to recommence translation, which seems to be the essential function of trans-translation. This is SsrA-binding protein from Xylella fastidiosa (strain M23).